A 231-amino-acid polypeptide reads, in one-letter code: Orotidine 5'-phosphate decarboxylase (231 aa).

Substrate-binding positions include D11, K33, 60 to 69 (DLKFHDIPNT), T119, R180, Q189, G209, and R210. K62 functions as the Proton donor in the catalytic mechanism.

Belongs to the OMP decarboxylase family. Type 1 subfamily. Homodimer.

It catalyses the reaction orotidine 5'-phosphate + H(+) = UMP + CO2. It participates in pyrimidine metabolism; UMP biosynthesis via de novo pathway; UMP from orotate: step 2/2. In terms of biological role, catalyzes the decarboxylation of orotidine 5'-monophosphate (OMP) to uridine 5'-monophosphate (UMP). This Idiomarina loihiensis (strain ATCC BAA-735 / DSM 15497 / L2-TR) protein is Orotidine 5'-phosphate decarboxylase.